A 416-amino-acid polypeptide reads, in one-letter code: Adipocyte plasma membrane-associated protein (416 aa).

The interval 1 to 32 (MSEADGLRQRRPLRPQVVTDDDGQAPEAKDGS) is disordered. The residue at position 2 (S2) is an N-acetylserine. Topologically, residues 2–40 (SEADGLRQRRPLRPQVVTDDDGQAPEAKDGSSFSGRVFR) are cytoplasmic. T19 is subject to Phosphothreonine. Residues 41–61 (VTFLMLAVSLTVPLLGAMMLL) form a helical; Signal-anchor for type II membrane protein membrane-spanning segment. Residues 62–416 (ESPIDPQPLS…FLCRLSLQAV (355 aa)) lie on the Extracellular side of the membrane. N160 and N196 each carry an N-linked (GlcNAc...) asparagine glycan.

This sequence belongs to the strictosidine synthase family. As to expression, liver, glomerular and tubular structures of the kidney, endothelial cells, arterial wall and pancreatic islets of Langerhans (at protein level). Found ubiquitously in adult as well as in embryonic tissues. In adult tissue, the highest expression is found in the liver, placenta and heart. Found on the cell surface of monocytes. In embryonic tissue, the highest expression levels is found in the liver and the kidney.

It is found in the membrane. Its function is as follows. Exhibits strong arylesterase activity with beta-naphthyl acetate and phenyl acetate. May play a role in adipocyte differentiation. This Homo sapiens (Human) protein is Adipocyte plasma membrane-associated protein (APMAP).